Reading from the N-terminus, the 264-residue chain is Propanediol uptake facilitator PduF (264 aa).

The next 2 helical transmembrane spans lie at 10-30 and 42-62; these read GAEF…LSAL and ICII…GISG. The NPA 1 signature appears at 66 to 68; the sequence is NPA. A run of 3 helical transmembrane segments spans residues 84–104, 143–163, and 179–199; these read VLPY…LAYV, VWQA…MIMA, and LLIG…TGFA. The short motif at 201–203 is the NPA 2 element; that stretch reads NPA. A helical transmembrane segment spans residues 228 to 248; that stretch reads IPYFIVPIVAPVIGACAGAAI.

It belongs to the MIP/aquaporin (TC 1.A.8) family.

The protein resides in the cell inner membrane. Functionally, probably facilitates diffusion of 1,2-propanediol (1,2-PD) into the cell. Modeling suggests active transport of 1,2-PD is required at low extracellular concentrations to allow maximal growth and saturation of PduP/PduQ within the bacterial microcompartment (BMC); this protein may be the cellular transporter. In terms of biological role, the 1,2-PD-specific bacterial microcompartment (BMC) concentrates low levels of 1,2-PD catabolic enzymes, concentrates volatile reaction intermediates thus enhancing pathway flux and keeps the level of toxic, mutagenic propionaldehyde low. The polypeptide is Propanediol uptake facilitator PduF (Salmonella typhimurium (strain LT2 / SGSC1412 / ATCC 700720)).